The sequence spans 229 residues: Cytochrome c oxidase subunit 2 (229 aa).

At 1–26 (MSTWANLGLQDSASPLMEQLIFFHDH) the chain is on the mitochondrial intermembrane side. The chain crosses the membrane as a helical span at residues 27–48 (ALLILVMITVLVGYLMFMLFFN). The Mitochondrial matrix portion of the chain corresponds to 49–62 (SYVNRFLLHGQLIE). Residues 63-82 (MIWTILPAIILLFIAMPSLR) form a helical membrane-spanning segment. The Mitochondrial intermembrane portion of the chain corresponds to 83–229 (LLYLLDEINE…IKWISSTVNS (147 aa)). Residues histidine 161, cysteine 196, glutamate 198, cysteine 200, histidine 204, and methionine 207 each coordinate Cu cation. Position 198 (glutamate 198) interacts with Mg(2+).

Belongs to the cytochrome c oxidase subunit 2 family. Component of the cytochrome c oxidase (complex IV, CIV), a multisubunit enzyme composed of a catalytic core of 3 subunits and several supernumerary subunits. The complex exists as a monomer or a dimer and forms supercomplexes (SCs) in the inner mitochondrial membrane with ubiquinol-cytochrome c oxidoreductase (cytochrome b-c1 complex, complex III, CIII). The cofactor is Cu cation.

It localises to the mitochondrion inner membrane. The catalysed reaction is 4 Fe(II)-[cytochrome c] + O2 + 8 H(+)(in) = 4 Fe(III)-[cytochrome c] + 2 H2O + 4 H(+)(out). Functionally, component of the cytochrome c oxidase, the last enzyme in the mitochondrial electron transport chain which drives oxidative phosphorylation. The respiratory chain contains 3 multisubunit complexes succinate dehydrogenase (complex II, CII), ubiquinol-cytochrome c oxidoreductase (cytochrome b-c1 complex, complex III, CIII) and cytochrome c oxidase (complex IV, CIV), that cooperate to transfer electrons derived from NADH and succinate to molecular oxygen, creating an electrochemical gradient over the inner membrane that drives transmembrane transport and the ATP synthase. Cytochrome c oxidase is the component of the respiratory chain that catalyzes the reduction of oxygen to water. Electrons originating from reduced cytochrome c in the intermembrane space (IMS) are transferred via the dinuclear copper A center (CU(A)) of subunit 2 and heme A of subunit 1 to the active site in subunit 1, a binuclear center (BNC) formed by heme A3 and copper B (CU(B)). The BNC reduces molecular oxygen to 2 water molecules using 4 electrons from cytochrome c in the IMS and 4 protons from the mitochondrial matrix. In Drosophila lowei (Fruit fly), this protein is Cytochrome c oxidase subunit 2 (mt:CoII).